Reading from the N-terminus, the 347-residue chain is Dihydroorotase (347 aa).

The Zn(2+) site is built by His-17 and His-19. Substrate is bound by residues 19-21 (HLR) and Asn-45. Positions 103, 140, and 178 each coordinate Zn(2+). The residue at position 103 (Lys-103) is an N6-carboxylysine. Substrate is bound at residue His-140. Leu-223 is a binding site for substrate. Asp-251 contributes to the Zn(2+) binding site. Residue Asp-251 is part of the active site. Residues His-255 and Ala-267 each coordinate substrate.

The protein belongs to the metallo-dependent hydrolases superfamily. DHOase family. Class II DHOase subfamily. Homodimer. Zn(2+) serves as cofactor.

The catalysed reaction is (S)-dihydroorotate + H2O = N-carbamoyl-L-aspartate + H(+). It participates in pyrimidine metabolism; UMP biosynthesis via de novo pathway; (S)-dihydroorotate from bicarbonate: step 3/3. Functionally, catalyzes the reversible cyclization of carbamoyl aspartate to dihydroorotate. The sequence is that of Dihydroorotase from Pectobacterium atrosepticum (strain SCRI 1043 / ATCC BAA-672) (Erwinia carotovora subsp. atroseptica).